We begin with the raw amino-acid sequence, 371 residues long: Cytochrome b (371 aa).

The next 4 membrane-spanning stretches (helical) occupy residues 25 to 45 (FGSM…FLAV), 69 to 90 (WMMQ…YIHI), 105 to 125 (WMSG…GYIL), and 170 to 190 (FFAL…LHIL). Heme b-binding residues include His75 and His89. Heme b contacts are provided by His174 and His188. His193 provides a ligand contact to a ubiquinone. The next 4 helical transmembrane spans lie at 218 to 238 (YKDL…TFFL), 280 to 300 (LGGA…PFTH), 312 to 332 (MSQL…WAAT), and 339 to 358 (FMMI…ISNP).

It belongs to the cytochrome b family. As to quaternary structure, the cytochrome bc1 complex contains 3 respiratory subunits (MT-CYB, CYC1 and UQCRFS1), 2 core proteins (UQCRC1 and UQCRC2) and probably 6 low-molecular weight proteins. Requires heme b as cofactor.

It is found in the mitochondrion inner membrane. Component of the ubiquinol-cytochrome c reductase complex (complex III or cytochrome b-c1 complex) that is part of the mitochondrial respiratory chain. The b-c1 complex mediates electron transfer from ubiquinol to cytochrome c. Contributes to the generation of a proton gradient across the mitochondrial membrane that is then used for ATP synthesis. This chain is Cytochrome b (MT-CYB), found in Casarea dussumieri (Round Island keel-scaled boa).